Reading from the N-terminus, the 24-residue chain is Glutathione S-transferase (24 aa).

This sequence belongs to the GST superfamily. As to quaternary structure, monomer and homodimer.

It localises to the cytoplasm. The catalysed reaction is RX + glutathione = an S-substituted glutathione + a halide anion + H(+). Functionally, conjugation of reduced glutathione to a wide number of exogenous and endogenous hydrophobic electrophiles. This Pseudomonas sp. (strain CF600) protein is Glutathione S-transferase.